Reading from the N-terminus, the 476-residue chain is Tubulointerstitial nephritis antigen (476 aa).

The N-linked (GlcNAc...) asparagine glycan is linked to N38. The SMB domain maps to 59 to 107 (RFGCCADRDDGCVTQFYEADALCYCDKFCERENSDCCPDYKSFCREEKG). Intrachain disulfides connect C63-C83 and C87-C94. N175, N314, N360, and N455 each carry an N-linked (GlcNAc...) asparagine glycan.

The protein belongs to the peptidase C1 family.

It localises to the secreted. The protein localises to the extracellular space. Its subcellular location is the extracellular matrix. The protein resides in the basement membrane. In terms of biological role, mediates adhesion of proximal tubule epithelial cells via integrins alpha3-beta1 and alphaV-beta3. This is a non catalytic peptidase C1 family protein. In Bos taurus (Bovine), this protein is Tubulointerstitial nephritis antigen (TINAG).